The following is a 549-amino-acid chain: Cytoplasmic trehalase (549 aa).

Substrate-binding positions include Arg-168, Trp-175–Asp-176, Asn-212, Arg-221–Gln-223, Arg-292–Glu-294, and Gly-324. Catalysis depends on proton donor/acceptor residues Asp-326 and Glu-509. Glu-525 is a binding site for substrate.

It belongs to the glycosyl hydrolase 37 family. Monomer.

It is found in the cytoplasm. It carries out the reaction alpha,alpha-trehalose + H2O = alpha-D-glucose + beta-D-glucose. Its pathway is glycan degradation; trehalose degradation; D-glucose from alpha,alpha-trehalose: step 1/1. Functionally, hydrolyzes trehalose to glucose. Could be involved, in cells returning to low osmolarity conditions, in the utilization of the accumulated cytoplasmic trehalose, which was synthesized in response to high osmolarity. The protein is Cytoplasmic trehalase of Salmonella typhi.